A 275-amino-acid chain; its full sequence is uncharacterized protein (275 aa).

Residues 20 to 22 (RAQ), 41 to 42 (DI), 80 to 81 (DI), and asparagine 107 contribute to the NAD(+) site. Residue serine 160 coordinates substrate. Catalysis depends on tyrosine 173, which acts as the Proton acceptor. NAD(+)-binding positions include lysine 177 and 206 to 208 (VDT).

Belongs to the short-chain dehydrogenases/reductases (SDR) family.

This is an uncharacterized protein from Mycobacterium tuberculosis (strain CDC 1551 / Oshkosh).